A 525-amino-acid chain; its full sequence is GMP synthase [glutamine-hydrolyzing] (525 aa).

Residues 8–206 form the Glutamine amidotransferase type-1 domain; it reads PLLILDFGSQ…VVDICKASTD (199 aa). Residue Cys85 is the Nucleophile of the active site. Catalysis depends on residues His180 and Glu182. One can recognise a GMPS ATP-PPase domain in the interval 207–400; sequence WTPEHIIDEA…LGLPHDMVYR (194 aa). 234–240 contacts ATP; it reads SGGVDSS.

Homodimer.

It catalyses the reaction XMP + L-glutamine + ATP + H2O = GMP + L-glutamate + AMP + diphosphate + 2 H(+). It functions in the pathway purine metabolism; GMP biosynthesis; GMP from XMP (L-Gln route): step 1/1. Its function is as follows. Catalyzes the synthesis of GMP from XMP. The chain is GMP synthase [glutamine-hydrolyzing] from Legionella pneumophila (strain Lens).